The following is a 176-amino-acid chain: NAD(P)H-quinone oxidoreductase subunit 6, chloroplastic (176 aa).

Helical transmembrane passes span 10–30 (FLLV…VLLP), 32–52 (PIYS…FYIL), 61–81 (AQLL…VMFM), 92–112 (LWTV…ISLI), and 152–172 (FFLP…GAIA).

It belongs to the complex I subunit 6 family. NDH is composed of at least 16 different subunits, 5 of which are encoded in the nucleus.

It is found in the plastid. The protein resides in the chloroplast thylakoid membrane. The catalysed reaction is a plastoquinone + NADH + (n+1) H(+)(in) = a plastoquinol + NAD(+) + n H(+)(out). It carries out the reaction a plastoquinone + NADPH + (n+1) H(+)(in) = a plastoquinol + NADP(+) + n H(+)(out). Functionally, NDH shuttles electrons from NAD(P)H:plastoquinone, via FMN and iron-sulfur (Fe-S) centers, to quinones in the photosynthetic chain and possibly in a chloroplast respiratory chain. The immediate electron acceptor for the enzyme in this species is believed to be plastoquinone. Couples the redox reaction to proton translocation, and thus conserves the redox energy in a proton gradient. This chain is NAD(P)H-quinone oxidoreductase subunit 6, chloroplastic (ndhG), found in Solanum tuberosum (Potato).